The following is a 231-amino-acid chain: Uracil-DNA glycosylase (231 aa).

Catalysis depends on aspartate 70, which acts as the Proton acceptor.

Belongs to the uracil-DNA glycosylase (UDG) superfamily. UNG family.

Its subcellular location is the cytoplasm. The enzyme catalyses Hydrolyzes single-stranded DNA or mismatched double-stranded DNA and polynucleotides, releasing free uracil.. In terms of biological role, excises uracil residues from the DNA which can arise as a result of misincorporation of dUMP residues by DNA polymerase or due to deamination of cytosine. This is Uracil-DNA glycosylase from Pseudomonas fluorescens (strain Pf0-1).